The chain runs to 288 residues: Polyamine aminopropyltransferase (288 aa).

Positions 9-238 (ETLHDQFGQY…GIMTFAWATD (230 aa)) constitute a PABS domain. Glutamine 33 lines the S-methyl-5'-thioadenosine pocket. Spermidine contacts are provided by histidine 64 and aspartate 88. S-methyl-5'-thioadenosine is bound by residues glutamate 108 and 140–141 (DG). Aspartate 158 (proton acceptor) is an active-site residue. 158–161 (DCTD) is a spermidine binding site. Proline 165 lines the S-methyl-5'-thioadenosine pocket.

Belongs to the spermidine/spermine synthase family. As to quaternary structure, homodimer or homotetramer.

Its subcellular location is the cytoplasm. The catalysed reaction is S-adenosyl 3-(methylsulfanyl)propylamine + putrescine = S-methyl-5'-thioadenosine + spermidine + H(+). It participates in amine and polyamine biosynthesis; spermidine biosynthesis; spermidine from putrescine: step 1/1. In terms of biological role, catalyzes the irreversible transfer of a propylamine group from the amino donor S-adenosylmethioninamine (decarboxy-AdoMet) to putrescine (1,4-diaminobutane) to yield spermidine. This chain is Polyamine aminopropyltransferase, found in Escherichia coli (strain UTI89 / UPEC).